The chain runs to 213 residues: Octanoyltransferase (213 aa).

Residues 32–207 enclose the BPL/LPL catalytic domain; the sequence is ESTLDEIWLV…NILALLNNPD (176 aa). Residues 71-78, 138-140, and 151-153 each bind substrate; these read RGGQVTYH, SLG, and GLA. Cys169 serves as the catalytic Acyl-thioester intermediate.

It belongs to the LipB family.

The protein resides in the cytoplasm. The enzyme catalyses octanoyl-[ACP] + L-lysyl-[protein] = N(6)-octanoyl-L-lysyl-[protein] + holo-[ACP] + H(+). The protein operates within protein modification; protein lipoylation via endogenous pathway; protein N(6)-(lipoyl)lysine from octanoyl-[acyl-carrier-protein]: step 1/2. Its function is as follows. Catalyzes the transfer of endogenously produced octanoic acid from octanoyl-acyl-carrier-protein onto the lipoyl domains of lipoate-dependent enzymes. Lipoyl-ACP can also act as a substrate although octanoyl-ACP is likely to be the physiological substrate. The sequence is that of Octanoyltransferase from Escherichia coli (strain SMS-3-5 / SECEC).